Reading from the N-terminus, the 260-residue chain is CD40 ligand (260 aa).

At 1–22 (MIETYSQPSPRSVATGLPASMK) the chain is on the cytoplasmic side. Residues 23–46 (IFMYLLTVFLITQMIGSVLFAVYL) traverse the membrane as a helical; Signal-anchor for type II membrane protein segment. Residues 47–260 (HRRLDKVEEE…GFSSFGLLKL (214 aa)) lie on the Extracellular side of the membrane. One can recognise a THD domain in the interval 121–260 (IAAHVVSEAN…GFSSFGLLKL (140 aa)). Residues Cys177 and Cys217 are joined by a disulfide bond. N-linked (GlcNAc...) asparagine glycosylation occurs at Asn239.

It belongs to the tumor necrosis factor family. In terms of assembly, homotrimer. Interacts with CD28. CD40 ligand, soluble form: Exists as either a monomer or a homotrimer. Forms a ternary complex between CD40 and integrins for CD40-CD40LG signaling. In terms of processing, the soluble form derives from the membrane form by proteolytic processing. As to expression, specifically expressed on activated CD4+ T-lymphocytes.

It localises to the cell membrane. It is found in the cell surface. The protein resides in the secreted. Its function is as follows. Cytokine that acts as a ligand to CD40/TNFRSF5. Costimulates T-cell proliferation and cytokine production. Its cross-linking on T-cells generates a costimulatory signal which enhances the production of IL4 and IL10 in conjunction with the TCR/CD3 ligation and CD28 costimulation. Induces the activation of NF-kappa-B. Induces the activation of kinases MAPK8 and PAK2 in T-cells. Mediates B-cell proliferation in the absence of co-stimulus as well as IgE production in the presence of IL4. Involved in immunoglobulin class switching. Functionally, acts as a ligand for integrins, specifically ITGA5:ITGB1 and ITGAV:ITGB3; both integrins and the CD40 receptor are required for activation of CD40-CD40LG signaling, which have cell-type dependent effects, such as B-cell activation, NF-kappa-B signaling and anti-apoptotic signaling. This Mus musculus (Mouse) protein is CD40 ligand (Cd40lg).